The chain runs to 458 residues: Sphingomyelinase DDB_G0288017 (458 aa).

Positions 91 to 111 are disordered; that stretch reads NKKAKSPPPPSSLKQQNLHNN. Glutamate 135 serves as a coordination point for Mg(2+). The active-site Proton acceptor is histidine 447.

Belongs to the neutral sphingomyelinase family. It depends on Mg(2+) as a cofactor.

The enzyme catalyses a sphingomyelin + H2O = phosphocholine + an N-acylsphing-4-enine + H(+). It participates in lipid metabolism; sphingolipid metabolism. In terms of biological role, catalyzes the hydrolysis of sphingomyelin to form ceramide and phosphocholine. This is Sphingomyelinase DDB_G0288017 from Dictyostelium discoideum (Social amoeba).